The following is a 130-amino-acid chain: Fluoride-specific ion channel FluC (130 aa).

4 consecutive transmembrane segments (helical) span residues 2 to 22 (GLLL…RFAL), 36 to 56 (GILL…AFLI), 71 to 91 (FLLV…SLDI), and 100 to 120 (IFIA…AVIL). Na(+)-binding residues include G79 and T82.

This sequence belongs to the fluoride channel Fluc/FEX (TC 1.A.43) family.

It localises to the cell inner membrane. The enzyme catalyses fluoride(in) = fluoride(out). With respect to regulation, na(+) is not transported, but it plays an essential structural role and its presence is essential for fluoride channel function. Fluoride-specific ion channel. Important for reducing fluoride concentration in the cell, thus reducing its toxicity. This Francisella tularensis subsp. mediasiatica (strain FSC147) protein is Fluoride-specific ion channel FluC.